We begin with the raw amino-acid sequence, 277 residues long: Histone-lysine N-methyltransferase set-17 (277 aa).

The SET domain occupies 135 to 246; sequence FRIEESKLPN…INQELLVWYG (112 aa). S-adenosyl-L-methionine is bound at residue Y245.

It belongs to the class V-like SAM-binding methyltransferase superfamily. Expressed in the germline. Predominantly expressed in primary spermatocytes. Also expressed in the oocyte-producing germline of hermaphrodites.

The protein resides in the nucleus. The enzyme catalyses N(6)-methyl-L-lysyl(4)-[histone H3] + S-adenosyl-L-methionine = N(6),N(6)-dimethyl-L-lysyl(4)-[histone H3] + S-adenosyl-L-homocysteine + H(+). It carries out the reaction L-lysyl(4)-[histone H3] + S-adenosyl-L-methionine = N(6)-methyl-L-lysyl(4)-[histone H3] + S-adenosyl-L-homocysteine + H(+). Functionally, histone methyltransferase that specifically mono- and di-methylates 'Lys-4' of histone H3 in vitro. Does not tri-methylate 'Lys-4' of histone H3 in vitro. Promotes spermatid development and fertility by positively regulating the transcription of spermatocyte-specific genes in primary spermatocytes. Together with spr-5, required for transgenerational fertility. The protein is Histone-lysine N-methyltransferase set-17 of Caenorhabditis elegans.